The chain runs to 503 residues: D-alanine--D-alanyl carrier protein ligase (503 aa).

151–152 (TS) is a binding site for ATP. Asp196 contacts D-alanine. 291–296 (NTYGPT) lines the ATP pocket. Residue Val300 participates in D-alanine binding. Positions 382 and 491 each coordinate ATP. Position 491 (Lys491) interacts with D-alanine.

It belongs to the ATP-dependent AMP-binding enzyme family. DltA subfamily.

It localises to the cytoplasm. It catalyses the reaction holo-[D-alanyl-carrier protein] + D-alanine + ATP = D-alanyl-[D-alanyl-carrier protein] + AMP + diphosphate. It functions in the pathway cell wall biogenesis; lipoteichoic acid biosynthesis. Functionally, catalyzes the first step in the D-alanylation of lipoteichoic acid (LTA), the activation of D-alanine and its transfer onto the D-alanyl carrier protein (Dcp) DltC. In an ATP-dependent two-step reaction, forms a high energy D-alanyl-AMP intermediate, followed by transfer of the D-alanyl residue as a thiol ester to the phosphopantheinyl prosthetic group of the Dcp. D-alanylation of LTA plays an important role in modulating the properties of the cell wall in Gram-positive bacteria, influencing the net charge of the cell wall. The sequence is that of D-alanine--D-alanyl carrier protein ligase from Bacillus velezensis (strain DSM 23117 / BGSC 10A6 / LMG 26770 / FZB42) (Bacillus amyloliquefaciens subsp. plantarum).